We begin with the raw amino-acid sequence, 198 residues long: Imidazoleglycerol-phosphate dehydratase (198 aa).

The protein belongs to the imidazoleglycerol-phosphate dehydratase family.

The protein resides in the cytoplasm. It catalyses the reaction D-erythro-1-(imidazol-4-yl)glycerol 3-phosphate = 3-(imidazol-4-yl)-2-oxopropyl phosphate + H2O. The protein operates within amino-acid biosynthesis; L-histidine biosynthesis; L-histidine from 5-phospho-alpha-D-ribose 1-diphosphate: step 6/9. The sequence is that of Imidazoleglycerol-phosphate dehydratase from Janthinobacterium sp. (strain Marseille) (Minibacterium massiliensis).